Consider the following 316-residue polypeptide: Pantothenate kinase (316 aa).

95–102 (GSVAVGKS) serves as a coordination point for ATP.

It belongs to the prokaryotic pantothenate kinase family.

It localises to the cytoplasm. It catalyses the reaction (R)-pantothenate + ATP = (R)-4'-phosphopantothenate + ADP + H(+). The protein operates within cofactor biosynthesis; coenzyme A biosynthesis; CoA from (R)-pantothenate: step 1/5. The protein is Pantothenate kinase of Shewanella baltica (strain OS223).